The primary structure comprises 212 residues: Peptide methionine sulfoxide reductase MsrA (212 aa).

Residue cysteine 52 is part of the active site.

It belongs to the MsrA Met sulfoxide reductase family.

It catalyses the reaction L-methionyl-[protein] + [thioredoxin]-disulfide + H2O = L-methionyl-(S)-S-oxide-[protein] + [thioredoxin]-dithiol. The enzyme catalyses [thioredoxin]-disulfide + L-methionine + H2O = L-methionine (S)-S-oxide + [thioredoxin]-dithiol. Functionally, has an important function as a repair enzyme for proteins that have been inactivated by oxidation. Catalyzes the reversible oxidation-reduction of methionine sulfoxide in proteins to methionine. This chain is Peptide methionine sulfoxide reductase MsrA, found in Shigella boydii serotype 18 (strain CDC 3083-94 / BS512).